Consider the following 201-residue polypeptide: ATP-dependent Clp protease proteolytic subunit (201 aa).

Catalysis depends on Ser-98, which acts as the Nucleophile. Residue His-123 is part of the active site.

The protein belongs to the peptidase S14 family. As to quaternary structure, fourteen ClpP subunits assemble into 2 heptameric rings which stack back to back to give a disk-like structure with a central cavity, resembling the structure of eukaryotic proteasomes.

The protein localises to the cytoplasm. The catalysed reaction is Hydrolysis of proteins to small peptides in the presence of ATP and magnesium. alpha-casein is the usual test substrate. In the absence of ATP, only oligopeptides shorter than five residues are hydrolyzed (such as succinyl-Leu-Tyr-|-NHMec, and Leu-Tyr-Leu-|-Tyr-Trp, in which cleavage of the -Tyr-|-Leu- and -Tyr-|-Trp bonds also occurs).. In terms of biological role, cleaves peptides in various proteins in a process that requires ATP hydrolysis. Has a chymotrypsin-like activity. Plays a major role in the degradation of misfolded proteins. The protein is ATP-dependent Clp protease proteolytic subunit of Neorickettsia sennetsu (strain ATCC VR-367 / Miyayama) (Ehrlichia sennetsu).